We begin with the raw amino-acid sequence, 291 residues long: Pantothenate synthetase (291 aa).

30 to 37 (MGALHAGH) provides a ligand contact to ATP. The active-site Proton donor is the H37. Residue Q61 coordinates (R)-pantoate. Q61 serves as a coordination point for beta-alanine. 147–150 (GQKD) contributes to the ATP binding site. (R)-pantoate is bound at residue Q153. ATP-binding positions include V176 and 184–187 (LSSR).

The protein belongs to the pantothenate synthetase family. In terms of assembly, homodimer.

The protein localises to the cytoplasm. The enzyme catalyses (R)-pantoate + beta-alanine + ATP = (R)-pantothenate + AMP + diphosphate + H(+). The protein operates within cofactor biosynthesis; (R)-pantothenate biosynthesis; (R)-pantothenate from (R)-pantoate and beta-alanine: step 1/1. In terms of biological role, catalyzes the condensation of pantoate with beta-alanine in an ATP-dependent reaction via a pantoyl-adenylate intermediate. This chain is Pantothenate synthetase, found in Koribacter versatilis (strain Ellin345).